The following is a 60-amino-acid chain: Cytotoxin 1 (60 aa).

4 cysteine pairs are disulfide-bonded: C3-C21, C14-C38, C42-C53, and C54-C59.

It belongs to the three-finger toxin family. Short-chain subfamily. Type IA cytotoxin sub-subfamily. As to quaternary structure, monomer in solution; Homodimer and oligomer in the presence of negatively charged lipids forming a pore with a size ranging between 20 and 30 Angstroms. Expressed by the venom gland.

It localises to the secreted. The protein resides in the target cell membrane. Shows cytolytic activity on many different cells by forming pore in lipid membranes. In vivo, increases heart rate or kills the animal by cardiac arrest. In addition, it binds to heparin with high affinity, interacts with Kv channel-interacting protein 1 (KCNIP1) in a calcium-independent manner, and binds to integrin alpha-V/beta-3 (ITGAV/ITGB3) with moderate affinity. This is Cytotoxin 1 from Naja melanoleuca (Forest cobra).